A 482-amino-acid polypeptide reads, in one-letter code: uncharacterized protein (482 aa).

Residues 12–80 form the HTH gntR-type domain; the sequence is LPKYRQIVHF…MGKGTVVINN (69 aa). The H-T-H motif DNA-binding region spans 40-59; the sequence is QRTLAKDFQVNRSTVITALE. At K325 the chain carries N6-(pyridoxal phosphate)lysine.

In the C-terminal section; belongs to the class-I pyridoxal-phosphate-dependent aminotransferase family. Requires pyridoxal 5'-phosphate as cofactor.

This is an uncharacterized protein from Bacillus subtilis (strain 168).